Here is a 38-residue protein sequence, read N- to C-terminus: Photosystem II reaction center protein L (38 aa).

Residues 17 to 37 (SLYWGLLLIFVLAVPFSNYFF) form a helical membrane-spanning segment.

This sequence belongs to the PsbL family. In terms of assembly, PSII is composed of 1 copy each of membrane proteins PsbA, PsbB, PsbC, PsbD, PsbE, PsbF, PsbH, PsbI, PsbJ, PsbK, PsbL, PsbM, PsbT, PsbX, PsbY, PsbZ, Psb30/Ycf12, at least 3 peripheral proteins of the oxygen-evolving complex and a large number of cofactors. It forms dimeric complexes.

It localises to the plastid. The protein resides in the chloroplast thylakoid membrane. In terms of biological role, one of the components of the core complex of photosystem II (PSII). PSII is a light-driven water:plastoquinone oxidoreductase that uses light energy to abstract electrons from H(2)O, generating O(2) and a proton gradient subsequently used for ATP formation. It consists of a core antenna complex that captures photons, and an electron transfer chain that converts photonic excitation into a charge separation. This subunit is found at the monomer-monomer interface and is required for correct PSII assembly and/or dimerization. The chain is Photosystem II reaction center protein L from Pinus thunbergii (Japanese black pine).